Consider the following 671-residue polypeptide: Archaeal Rqc2 homolog aRqcH (671 aa).

Coiled-coil stretches lie at residues 291–363 (KVVV…ARIK) and 410–465 (RKNA…MQMK).

It belongs to the NEMF family. Associates with stalled 50S ribosomal subunits.

Probably part of the ribosome quality control system (RQC). May mediate the addition of alanine residues (Ala tailing) to incompletely synthesized nascent chains from stalled ribosomes, leading to their degradation. The polypeptide is Archaeal Rqc2 homolog aRqcH (Methanocaldococcus jannaschii (strain ATCC 43067 / DSM 2661 / JAL-1 / JCM 10045 / NBRC 100440) (Methanococcus jannaschii)).